We begin with the raw amino-acid sequence, 367 residues long: Alanine racemase (367 aa).

Lys-40 serves as the catalytic Proton acceptor; specific for D-alanine. Lys-40 is modified (N6-(pyridoxal phosphate)lysine). A substrate-binding site is contributed by Arg-136. Tyr-263 (proton acceptor; specific for L-alanine) is an active-site residue. Met-310 provides a ligand contact to substrate.

It belongs to the alanine racemase family. Pyridoxal 5'-phosphate is required as a cofactor.

It carries out the reaction L-alanine = D-alanine. Its pathway is amino-acid biosynthesis; D-alanine biosynthesis; D-alanine from L-alanine: step 1/1. Functionally, catalyzes the interconversion of L-alanine and D-alanine. May also act on other amino acids. In Lactococcus lactis subsp. cremoris (strain SK11), this protein is Alanine racemase (alr).